Here is a 243-residue protein sequence, read N- to C-terminus: Glucosamine-6-phosphate deaminase (243 aa).

The active-site Proton acceptor; for enolization step is D67. Catalysis depends on N137, which acts as the For ring-opening step. H139 functions as the Proton acceptor; for ring-opening step in the catalytic mechanism. The active-site For ring-opening step is the E144.

Belongs to the glucosamine/galactosamine-6-phosphate isomerase family. NagB subfamily.

It catalyses the reaction alpha-D-glucosamine 6-phosphate + H2O = beta-D-fructose 6-phosphate + NH4(+). It participates in amino-sugar metabolism; N-acetylneuraminate degradation; D-fructose 6-phosphate from N-acetylneuraminate: step 5/5. In terms of biological role, catalyzes the reversible isomerization-deamination of glucosamine 6-phosphate (GlcN6P) to form fructose 6-phosphate (Fru6P) and ammonium ion. This is Glucosamine-6-phosphate deaminase from Staphylococcus epidermidis (strain ATCC 35984 / DSM 28319 / BCRC 17069 / CCUG 31568 / BM 3577 / RP62A).